The primary structure comprises 513 residues: ATP synthase subunit alpha 1 (513 aa).

169–176 (GDRQTGKT) provides a ligand contact to ATP.

It belongs to the ATPase alpha/beta chains family. As to quaternary structure, F-type ATPases have 2 components, CF(1) - the catalytic core - and CF(0) - the membrane proton channel. CF(1) has five subunits: alpha(3), beta(3), gamma(1), delta(1), epsilon(1). CF(0) has three main subunits: a(1), b(2) and c(9-12). The alpha and beta chains form an alternating ring which encloses part of the gamma chain. CF(1) is attached to CF(0) by a central stalk formed by the gamma and epsilon chains, while a peripheral stalk is formed by the delta and b chains.

It is found in the cell inner membrane. It catalyses the reaction ATP + H2O + 4 H(+)(in) = ADP + phosphate + 5 H(+)(out). Its function is as follows. Produces ATP from ADP in the presence of a proton gradient across the membrane. The alpha chain is a regulatory subunit. This chain is ATP synthase subunit alpha 1, found in Methylococcus capsulatus (strain ATCC 33009 / NCIMB 11132 / Bath).